Reading from the N-terminus, the 89-residue chain is Probable Fe(2+)-trafficking protein (89 aa).

It belongs to the Fe(2+)-trafficking protein family.

Could be a mediator in iron transactions between iron acquisition and iron-requiring processes, such as synthesis and/or repair of Fe-S clusters in biosynthetic enzymes. The sequence is that of Probable Fe(2+)-trafficking protein from Acinetobacter baumannii (strain AB0057).